Consider the following 102-residue polypeptide: Guanyl-specific ribonuclease Pc (102 aa).

2 disulfides stabilise this stretch: cysteine 2/cysteine 10 and cysteine 6/cysteine 101. Histidine 38 is an active-site residue. Glutamate 56 serves as the catalytic Proton acceptor. Histidine 90 acts as the Proton donor in catalysis.

Belongs to the ribonuclease N1/T1 family.

It carries out the reaction [RNA] containing guanosine + H2O = an [RNA fragment]-3'-guanosine-3'-phosphate + a 5'-hydroxy-ribonucleotide-3'-[RNA fragment].. This Penicillium chrysogenum (Penicillium notatum) protein is Guanyl-specific ribonuclease Pc.